The chain runs to 327 residues: Phenylalanine--tRNA ligase alpha subunit (327 aa).

Glu-252 contacts Mg(2+).

This sequence belongs to the class-II aminoacyl-tRNA synthetase family. Phe-tRNA synthetase alpha subunit type 1 subfamily. As to quaternary structure, tetramer of two alpha and two beta subunits. Mg(2+) serves as cofactor.

The protein resides in the cytoplasm. The catalysed reaction is tRNA(Phe) + L-phenylalanine + ATP = L-phenylalanyl-tRNA(Phe) + AMP + diphosphate + H(+). This Vibrio parahaemolyticus serotype O3:K6 (strain RIMD 2210633) protein is Phenylalanine--tRNA ligase alpha subunit.